We begin with the raw amino-acid sequence, 245 residues long: 6-carboxyhexanoate--CoA ligase (245 aa).

Belongs to the BioW family. In terms of assembly, homodimer. Mg(2+) is required as a cofactor.

It carries out the reaction heptanedioate + ATP + CoA = 6-carboxyhexanoyl-CoA + AMP + diphosphate. The protein operates within metabolic intermediate metabolism; pimeloyl-CoA biosynthesis; pimeloyl-CoA from pimelate: step 1/1. Functionally, catalyzes the transformation of pimelate into pimeloyl-CoA with concomitant hydrolysis of ATP to AMP. The protein is 6-carboxyhexanoate--CoA ligase of Sulfurihydrogenibium azorense (strain DSM 15241 / OCM 825 / Az-Fu1).